Reading from the N-terminus, the 730-residue chain is Dual function macrocyclase-peptidase POPB (730 aa).

Catalysis depends on charge relay system residues Ser-577, Asp-661, and His-698.

It belongs to the peptidase S9A family. Monomer. In terms of tissue distribution, expressed in the pileus (cap) and lamellae where it colocalizes with amanitin.

The enzyme catalyses Hydrolysis of Pro-|-Xaa &gt;&gt; Ala-|-Xaa in oligopeptides.. In terms of biological role, dual function macrocyclase-peptidase involved in the biosynthesis of the highly toxic amanitin toxin family of macrocycles. Cleaves peptide bonds on the C-terminal side of prolyl residues. The enzyme first removes 10 residues from the N-terminus of a 35-residue substrate. Conformational trapping of the 25 amino-acid peptide forces the enzyme to release this intermediate rather than proceed to macrocyclization. The enzyme rebinds the 25 amino-acid peptide in a different conformation and catalyzes macrocyclization of the N-terminal eight residues. In Amanita bisporigera (Destroying angel), this protein is Dual function macrocyclase-peptidase POPB.